The following is a 210-amino-acid chain: Riboflavin kinase (210 aa).

Residues 1 to 81 (MECRERRLAA…DLLRYFNIAS (81 aa)) are H-T-H motif-like. The riboflavin kinase stretch occupies residues 82-210 (IRLVGRVVSG…GDVVEVEVLL (129 aa)). Residue 91–96 (GLGEGA) coordinates CDP. Positions 120 and 122 each coordinate Mg(2+). FMN contacts are provided by threonine 177 and glutamate 185. 190 to 193 (VKLR) provides a ligand contact to CDP.

Belongs to the archaeal riboflavin kinase family. Requires Mg(2+) as cofactor.

It catalyses the reaction riboflavin + CTP = CDP + FMN + H(+). It functions in the pathway cofactor biosynthesis; FMN biosynthesis; FMN from riboflavin (CTP route): step 1/1. Its function is as follows. Catalyzes the CTP-dependent phosphorylation of riboflavin (vitamin B2) to form flavin mononucleotide (FMN). The polypeptide is Riboflavin kinase (ribK) (Pyrobaculum arsenaticum (strain DSM 13514 / JCM 11321 / PZ6)).